We begin with the raw amino-acid sequence, 189 residues long: uncharacterized protein (189 aa).

4 consecutive transmembrane segments (helical) span residues 20–40 (FILGSVIFVEFFIFGLVYLTF), 46–66 (TIIITSGVILICLLPISIILI), 100–120 (VLLFIVGINFYLFGNLVSLNI), and 126–146 (FVLYSISAFFIIISIVVGDVI).

The protein to M.jannaschii MJ0795.1 and MJ1249.1.

Its subcellular location is the cell membrane. This is an uncharacterized protein from Methanocaldococcus jannaschii (strain ATCC 43067 / DSM 2661 / JAL-1 / JCM 10045 / NBRC 100440) (Methanococcus jannaschii).